The chain runs to 562 residues: uncharacterized protein (562 aa).

A run of 5 helical transmembrane segments spans residues 4-26 (VRWIISTAPEIFLLLAVAIGTML), 33-55 (GFAIGTTACILIVSVLIGQLGTF), 59-78 (ALLRIVLFSLFVFTIGYKSG), 90-112 (LAQVAMALVLGGTGLVIVLAFAF), and 159-181 (IAAGYAVTYVLGYILTLLYVPFA). 2 consecutive RCK C-terminal domains span residues 207–287 (PKTE…IIGT) and 295–375 (LKAI…QVGQ). The next 6 helical transmembrane spans lie at 385-402 (IAFLAAGIAAGLLAGLVS), 406-428 (GGIALTLGGGGGALIAGLLCGWL), 449-471 (LGLGGFIAAIGLANGHAAWVAIQ), 476-498 (LLVGMGLVVTLVPLVVATLFAYH), 505-524 (VITCGALAGAMTVDAAVTGA), and 539-561 (VPYAVGNVVLTVLGPIIVACTFV).

It belongs to the AAE transporter (TC 2.A.81) family.

It localises to the cell membrane. This is an uncharacterized protein from Bradyrhizobium diazoefficiens (strain JCM 10833 / BCRC 13528 / IAM 13628 / NBRC 14792 / USDA 110).